An 890-amino-acid chain; its full sequence is ATP-dependent DNA helicase DDX11 (890 aa).

One can recognise a Helicase ATP-binding domain in the interval 4 to 424 (KSGRFPFPFQ…KNLMYIKQIL (421 aa)). 39–46 (SPTGTGKS) is an ATP binding site. The span at 71–85 (LLEGQKDSDVVKEKN) shows a compositional bias: basic and acidic residues. Disordered stretches follow at residues 71–95 (LLEGQKDSDVVKEKNSNSGPPEPDW) and 176–199 (EYESDDEATPKSRLCDDDNDDDDD). C246, C264, C294, and C329 together coordinate [4Fe-4S] cluster. The DEAH box signature appears at 372 to 375 (DEAH).

This sequence belongs to the DEAD box helicase family. DEAH subfamily. DDX11/CHL1 sub-subfamily. Requires [4Fe-4S] cluster as cofactor.

The protein localises to the nucleus. It localises to the nucleolus. Its subcellular location is the cytoplasm. The protein resides in the cytoskeleton. It is found in the spindle pole. The protein localises to the midbody. It localises to the microtubule organizing center. Its subcellular location is the centrosome. It catalyses the reaction Couples ATP hydrolysis with the unwinding of duplex DNA at the replication fork by translocating in the 5'-3' direction. This creates two antiparallel DNA single strands (ssDNA). The leading ssDNA polymer is the template for DNA polymerase III holoenzyme which synthesizes a continuous strand.. It carries out the reaction ATP + H2O = ADP + phosphate + H(+). Its function is as follows. DNA-dependent ATPase and ATP-dependent DNA helicase that participates in various functions in genomic stability, including DNA replication, DNA repair and heterochromatin organization as well as in ribosomal RNA synthesis. Plays a role in DNA double-strand break (DSB) repair at the DNA replication fork during DNA replication recovery from DNA damage. Plays a role in the regulation of sister chromatid cohesion and mitotic chromosome segregation. Stimulates 5'-single-stranded DNA flap endonuclease activity of FEN1 in an ATP- and helicase-independent manner. Also plays a role in heterochromatin organization. Involved in rRNA transcription activation through binding to active hypomethylated rDNA gene loci by recruiting UBTF and the RNA polymerase Pol I transcriptional machinery. Plays a role in embryonic development. Associates with chromatin at DNA replication fork regions. Binds to single- and double-stranded DNAs. This chain is ATP-dependent DNA helicase DDX11, found in Danio rerio (Zebrafish).